A 993-amino-acid chain; its full sequence is Signal peptide, CUB and EGF-like domain-containing protein 3 (993 aa).

A signal peptide spans 1–20 (MGSGRVPGLCLLLLLVHARA). The EGF-like 1; calcium-binding domain maps to 29–69 (DVDECVEGTDNCHIDAICQNTPRSYKCICKSGYTGDGKHCK). Disulfide bonds link Cys33–Cys46, Cys40–Cys55, Cys57–Cys68, Cys74–Cys86, Cys82–Cys95, Cys97–Cys110, Cys116–Cys127, Cys123–Cys136, Cys161–Cys172, Cys168–Cys182, Cys184–Cys197, Cys201–Cys212, Cys208–Cys221, Cys223–Cys236, Cys240–Cys251, Cys247–Cys260, Cys262–Cys275, Cys281–Cys292, Cys288–Cys301, Cys303–Cys316, Cys322–Cys332, Cys328–Cys341, Cys343–Cys355, Cys361–Cys372, Cys368–Cys381, and Cys383–Cys397. The EGF-like 2; calcium-binding domain maps to 70–111 (DVDECEREDNAGCVHDCVNIPGNYRCTCYDGFHLAHDGHNCL). Residues 112–148 (DVDECAEGNGGCQQSCVNMMGSYECHCRDGFFLSDNQ) enclose the EGF-like 3; calcium-binding domain. 3 consecutive EGF-like domains span residues 157–198 (EGMN…RDCK), 199–237 (LTCNYGNGGCQHTCDDTEQGPRCGCHVKFVLHTDGKTCI), and 238–276 (ETCAVNNGGCDSKCHDAATGVHCSCPVGFMLQPDRKTCK). One can recognise an EGF-like 7; calcium-binding domain in the interval 277 to 317 (DIDECRLNNGGCDHICRNTVGSFECSCKKGYKLLINERSCQ). The EGF-like 8; calcium-binding domain maps to 318–356 (DIDECSFDRTCDHMCVNTPGSFQCLCHRGYLLYGVTHCG). One can recognise an EGF-like 9; calcium-binding domain in the interval 357–398 (DVDECSINKGGCRFGCINTPGSYQCTCPAGQGRLHWNGKDCT). N-linked (GlcNAc...) asparagine glycosylation is found at Asn417, Asn464, Asn685, Asn756, and Asn785. 2 disulfides stabilise this stretch: Cys804–Cys830 and Cys857–Cys878. The 113-residue stretch at 804–916 (CGGELGEFTG…RGFQIPYVTY (113 aa)) folds into the CUB domain.

As to quaternary structure, forms homooligomers. Forms heterooligomers with SCUBE1 and SCUBE2. Interacts with TGFBR2 through the CUB domain; this interaction does not affect TGFB1-binding to TGFBR2. Interacts with BMP2, BMP4 and BMP7; the interaction is mediated by the CUB domain. Interacts with BMPR1A, BMPR1B and BMPR2; the interaction with BMPR1A and BMPR1B is BMP2- and BMP4-dependent. In terms of processing, N-glycosylated. Post-translationally, proteolytic cleavage produces a CUB-containing C-terminal fragment that retains the ability to bind to TGFBR2. This reaction is catalyzed in vitro by MMP2 and, to a lesser extent, by MMP9. Highly expressed in femur and humerus with little or no expression in non-bone tissues.

It is found in the secreted. Its subcellular location is the cell surface. Its function is as follows. Is a positive regulator of the BMP signaling pathway, required for proper chondrogenesis, osteogenesis and skeletal development. It acts as a coreceptor for BMP ligands, particularly BMP2 and BMP4, facilitating their interactions with BMP type I receptors. It is required for ligand-induced recruitment of BMP receptors to lipid rafts. Binds to TGFBR2 and activates TGFB signaling. This is Signal peptide, CUB and EGF-like domain-containing protein 3 from Mus musculus (Mouse).